The primary structure comprises 407 residues: Spore germination protein KC (407 aa).

The signal sequence occupies residues 1 to 20; the sequence is MVRKCLLAVLMLLSVIVLPG. Cys-21 is lipidated: N-palmitoyl cysteine. The S-diacylglycerol cysteine moiety is linked to residue Cys-21.

It belongs to the GerABKC lipoprotein family.

It is found in the cell membrane. Involved in the germination response to the combination of glucose, fructose, L-asparagine, and KCl. This is Spore germination protein KC (gerKC) from Bacillus subtilis (strain 168).